Here is a 170-residue protein sequence, read N- to C-terminus: Type IV pilus assembly protein C (170 aa).

An N-terminal signal peptide occupies residues 1–23 (MKSKLPLILINLSLISSPLGANA). Residues 87–107 (KTVSKPAKSNTPPQQAPVNNS) form a disordered region. Over residues 93–107 (AKSNTPPQQAPVNNS) the composition is skewed to polar residues. Residues 109-166 (RSILEAELSNERKALTEAQKMLSQARLAKGGNINHQKINALQSNVLDRQQNIQALQRE) adopt a coiled-coil conformation.

The protein localises to the periplasm. Required for stabilizing type IV pilus (T4p) in extended, nonretracted conformation on the bacterial cell surface. This chain is Type IV pilus assembly protein C, found in Neisseria gonorrhoeae (strain ATCC 700825 / FA 1090).